The primary structure comprises 415 residues: MPTWTEYILYKKLGKTPSPGDVVEIVPDLVGFHDLTGYHVLEVLESMGKVEVFDRERVVVAFDHLSPPPNQRAAEIMVYIRRHVKALGLPNFYDVGGGILHQIILEKYALPGQVIFAADSHTNTAGAVGAFAHGMGATDIAAALKLGKTWIVVPAPFRIDVVGEFPIGVMGKDVALHLLGQFGAEGFNGYSVEVFVETPKAFPMDDRATVANMSTEMGADALMFIPDVITAEYLKTERGVDYTPPRIEPGNYADKYTVELPRLEPLVAAPYSVDNIKSVREVEGVEVDQVFIGSCTNGRLSDIAVAAKILKGRRVKSRCIAIPASYEVFRRAMKLGYIDVLTEAGCVVTYGTCGPCLGGHFGVAGPGEVVVTTSNRNFRGRVGHPDAKIYLANPAVAAATAAEGKIADPRPYLRG.

3 residues coordinate [4Fe-4S] cluster: Cys-295, Cys-353, and Cys-356.

This sequence belongs to the aconitase/IPM isomerase family. LeuC type 2 subfamily. In terms of assembly, heterodimer of LeuC and LeuD. It depends on [4Fe-4S] cluster as a cofactor.

It carries out the reaction (2R,3S)-3-isopropylmalate = (2S)-2-isopropylmalate. It functions in the pathway amino-acid biosynthesis; L-leucine biosynthesis; L-leucine from 3-methyl-2-oxobutanoate: step 2/4. Its function is as follows. Catalyzes the isomerization between 2-isopropylmalate and 3-isopropylmalate, via the formation of 2-isopropylmaleate. This is 3-isopropylmalate dehydratase large subunit from Pyrobaculum aerophilum (strain ATCC 51768 / DSM 7523 / JCM 9630 / CIP 104966 / NBRC 100827 / IM2).